We begin with the raw amino-acid sequence, 336 residues long: Holliday junction branch migration complex subunit RuvB (336 aa).

The large ATPase domain (RuvB-L) stretch occupies residues 4-185; the sequence is MDERLLSGES…FGVLSRLEYY (182 aa). ATP contacts are provided by residues L24, R25, G66, K69, T70, T71, 132–134, R175, Y185, and R222; that span reads EDF. Mg(2+) is bound at residue T70. The interval 186–256 is small ATPAse domain (RuvB-S); it reads TVDQLSAIVE…ITQMALELLQ (71 aa). The interval 259–336 is head domain (RuvB-H); sequence KLGLDHIDHK…EHFGMEMPKV (78 aa). The DNA site is built by R314 and R319.

Belongs to the RuvB family. Homohexamer. Forms an RuvA(8)-RuvB(12)-Holliday junction (HJ) complex. HJ DNA is sandwiched between 2 RuvA tetramers; dsDNA enters through RuvA and exits via RuvB. An RuvB hexamer assembles on each DNA strand where it exits the tetramer. Each RuvB hexamer is contacted by two RuvA subunits (via domain III) on 2 adjacent RuvB subunits; this complex drives branch migration. In the full resolvosome a probable DNA-RuvA(4)-RuvB(12)-RuvC(2) complex forms which resolves the HJ.

The protein localises to the cytoplasm. The catalysed reaction is ATP + H2O = ADP + phosphate + H(+). The RuvA-RuvB-RuvC complex processes Holliday junction (HJ) DNA during genetic recombination and DNA repair, while the RuvA-RuvB complex plays an important role in the rescue of blocked DNA replication forks via replication fork reversal (RFR). RuvA specifically binds to HJ cruciform DNA, conferring on it an open structure. The RuvB hexamer acts as an ATP-dependent pump, pulling dsDNA into and through the RuvAB complex. RuvB forms 2 homohexamers on either side of HJ DNA bound by 1 or 2 RuvA tetramers; 4 subunits per hexamer contact DNA at a time. Coordinated motions by a converter formed by DNA-disengaged RuvB subunits stimulates ATP hydrolysis and nucleotide exchange. Immobilization of the converter enables RuvB to convert the ATP-contained energy into a lever motion, pulling 2 nucleotides of DNA out of the RuvA tetramer per ATP hydrolyzed, thus driving DNA branch migration. The RuvB motors rotate together with the DNA substrate, which together with the progressing nucleotide cycle form the mechanistic basis for DNA recombination by continuous HJ branch migration. Branch migration allows RuvC to scan DNA until it finds its consensus sequence, where it cleaves and resolves cruciform DNA. The chain is Holliday junction branch migration complex subunit RuvB from Bacillus thuringiensis (strain Al Hakam).